A 141-amino-acid chain; its full sequence is Large ribosomal subunit protein uL11 (141 aa).

It belongs to the universal ribosomal protein uL11 family. In terms of assembly, part of the ribosomal stalk of the 50S ribosomal subunit. Interacts with L10 and the large rRNA to form the base of the stalk. L10 forms an elongated spine to which L12 dimers bind in a sequential fashion forming a multimeric L10(L12)X complex.

In terms of biological role, forms part of the ribosomal stalk which helps the ribosome interact with GTP-bound translation factors. The protein is Large ribosomal subunit protein uL11 of Acidianus ambivalens (Desulfurolobus ambivalens).